The primary structure comprises 104 residues: Large ribosomal subunit protein bL21 (104 aa).

This sequence belongs to the bacterial ribosomal protein bL21 family. Part of the 50S ribosomal subunit. Contacts protein L20.

Functionally, this protein binds to 23S rRNA in the presence of protein L20. The polypeptide is Large ribosomal subunit protein bL21 (Leptospira borgpetersenii serovar Hardjo-bovis (strain JB197)).